The following is a 30-amino-acid chain: RICPRILMECSSDSDCLAECICLEQDGFCG.

3 cysteine pairs are disulfide-bonded: Cys-3–Cys-20, Cys-10–Cys-22, and Cys-16–Cys-29.

This sequence belongs to the protease inhibitor I7 (squash-type serine protease inhibitor) family.

It localises to the secreted. In terms of biological role, inhibits trypsin. The chain is Trypsin inhibitor 2 from Luffa aegyptiaca (Sponge gourd).